A 347-amino-acid chain; its full sequence is Nicotinate-nucleotide--dimethylbenzimidazole phosphoribosyltransferase (347 aa).

E316 (proton acceptor) is an active-site residue.

Belongs to the CobT family.

The catalysed reaction is 5,6-dimethylbenzimidazole + nicotinate beta-D-ribonucleotide = alpha-ribazole 5'-phosphate + nicotinate + H(+). The protein operates within nucleoside biosynthesis; alpha-ribazole biosynthesis; alpha-ribazole from 5,6-dimethylbenzimidazole: step 1/2. Functionally, catalyzes the synthesis of alpha-ribazole-5'-phosphate from nicotinate mononucleotide (NAMN) and 5,6-dimethylbenzimidazole (DMB). This chain is Nicotinate-nucleotide--dimethylbenzimidazole phosphoribosyltransferase, found in Vibrio campbellii (strain ATCC BAA-1116).